The primary structure comprises 214 residues: Probable GTP-binding protein EngB (214 aa).

The EngB-type G domain occupies 25–203 (EGAEVAFAGR…EQVITGWLNL (179 aa)). GTP contacts are provided by residues 33–40 (GRSNAGKS), 60–64 (GRTQL), 80–83 (DLPG), 147–150 (TKSD), and 182–184 (FSS). The Mg(2+) site is built by serine 40 and threonine 62.

It belongs to the TRAFAC class TrmE-Era-EngA-EngB-Septin-like GTPase superfamily. EngB GTPase family. Requires Mg(2+) as cofactor.

Its function is as follows. Necessary for normal cell division and for the maintenance of normal septation. The sequence is that of Probable GTP-binding protein EngB from Teredinibacter turnerae (strain ATCC 39867 / T7901).